The primary structure comprises 80 residues: MAKFASIITLIFAALVLFAAFDAPAMVEAQKLCEKPSGTWSGVCGNSNACKNQCINLEGAKHGSCNYVFPAHKCICYVPC.

Positions 1–29 (MAKFASIITLIFAALVLFAAFDAPAMVEA) are cleaved as a signal peptide. Gln30 bears the Pyrrolidone carboxylic acid mark. Disulfide bonds link Cys33–Cys80, Cys44–Cys65, Cys50–Cys74, and Cys54–Cys76.

Belongs to the DEFL family. In terms of tissue distribution, predominantly expressed in leaves.

The protein resides in the secreted. Its function is as follows. Confers broad-spectrum resistance to pathogens. Has antifungal activity in vitro. The chain is Defensin-like protein 16 (PDF1.2A) from Arabidopsis thaliana (Mouse-ear cress).